The following is a 555-amino-acid chain: MKVCQRKTIDTEKMSSVGDTACADLSEKKDNEKKKRSRVKQLLSDVKKQVEFWFGDVNLHKDRFMKSIIEQSRDGYIDIAVLTTFNRMKNLTADVKLIARALKNSTIVEVNDEGTRIRRKEPLGETPKDVDSRTVYVELLPKTVTHIWLERVFSKCGHVVYISIPRYKSTRHSKGFAFVEFETQEQAQKAVEMLNNPPEDAPRKPGIFPKTCRKKAVPFDAVTQDNDEDGKKKKTELKNSTSEETGSNNMDQDGMLESTVTSEPNLATLTSTVSKKAKKKRLRSQSFEASSGEDQFEMSSKMRKVEEEKSELKDLSSENKDEELNSLKKKDDSVLKAKRKRKKKLKERLKVGEEVIPLRVLSKKEWLDLKQEYLTLQKRCMAHLKQSVFQINQKPTNYHIVKLKEDDTNAFYKDTPKKELTSGPEFLSGVIVKISYNQPLPSKRCIKDMLSELSPVAYVDLLDGDTEGHVRFKSSEDAQKVIKARFEFQKKYNWNLELLSGDHERRYWQKILVDRQAKLNTPREKKRGTEKLISKAEKIIIAKAKEASNHIRFDD.

Residues arginine 36–proline 127 enclose the HTH La-type RNA-binding domain. Residues arginine 133 to threonine 211 form the RRM domain. Residues proline 218–leucine 327 form a disordered region. Polar residues-rich tracts occupy residues lysine 238 to aspartate 251, serine 258 to serine 274, and serine 284 to glutamate 293. Residues glutamine 295–isoleucine 356 adopt a coiled-coil conformation. Over residues arginine 303–leucine 327 the composition is skewed to basic and acidic residues. The 114-residue stretch at glutamate 425–lysine 538 folds into the xRRM domain.

It belongs to the LARP7 family. As to quaternary structure, core component of the 7SK RNP complex. Associates with box C/D small nucleolar ribonucleoprotein (snoRNP) complexes.

Its subcellular location is the nucleus. It is found in the nucleoplasm. Its function is as follows. RNA-binding protein that specifically binds distinct small nuclear RNA (snRNAs) and regulates their processing and function. Specifically binds the 7SK snRNA (7SK RNA) and acts as a core component of the 7SK ribonucleoprotein (RNP) complex, thereby acting as a negative regulator of transcription elongation by RNA polymerase II. The 7SK RNP complex sequesters the positive transcription elongation factor b (P-TEFb) in a large inactive 7SK RNP complex preventing RNA polymerase II phosphorylation and subsequent transcriptional elongation. The 7SK RNP complex also promotes snRNA gene transcription by RNA polymerase II via interaction with the little elongation complex (LEC). LARP7 specifically binds to the highly conserved 3'-terminal U-rich stretch of 7SK RNA; on stimulation, remains associated with 7SK RNA, whereas P-TEFb is released from the complex. LARP7 also acts as a regulator of mRNA splicing fidelity by promoting U6 snRNA processing. Specifically binds U6 snRNAs and associates with a subset of box C/D RNP complexes: promotes U6 snRNA 2'-O-methylation by facilitating U6 snRNA loading into box C/D RNP complexes. U6 snRNA 2'-O-methylation is required for mRNA splicing fidelity. This is La-related protein 7 from Danio rerio (Zebrafish).